A 436-amino-acid polypeptide reads, in one-letter code: Chromosomal replication initiator protein DnaA (436 aa).

Positions 1-69 (MLADEVIELL…ANIFEVKTGI (69 aa)) are domain I, interacts with DnaA modulators. Residues 69–99 (IKPVISITTQKNRVSIKAKDIDVKQIRTQSS) are domain II. Positions 100-314 (LLNPSYTFES…SAIININAFA (215 aa)) are domain III, AAA+ region. ATP is bound by residues Gly-144, Gly-146, Lys-147, and Thr-148. Residues 315–436 (NIMRQEITLE…ELKNKITSKE (122 aa)) form a domain IV, binds dsDNA region.

This sequence belongs to the DnaA family. Oligomerizes as a right-handed, spiral filament on DNA at oriC.

It is found in the cytoplasm. Its function is as follows. Plays an essential role in the initiation and regulation of chromosomal replication. ATP-DnaA binds to the origin of replication (oriC) to initiate formation of the DNA replication initiation complex once per cell cycle. Binds the DnaA box (a 9 base pair repeat at the origin) and separates the double-stranded (ds)DNA. Forms a right-handed helical filament on oriC DNA; dsDNA binds to the exterior of the filament while single-stranded (ss)DNA is stabiized in the filament's interior. The ATP-DnaA-oriC complex binds and stabilizes one strand of the AT-rich DNA unwinding element (DUE), permitting loading of DNA polymerase. After initiation quickly degrades to an ADP-DnaA complex that is not apt for DNA replication. Binds acidic phospholipids. The protein is Chromosomal replication initiator protein DnaA of Campylobacter fetus subsp. fetus (strain 82-40).